Consider the following 416-residue polypeptide: Glutamyl-tRNA reductase 1 (416 aa).

Residues 57-60, Ser-113, 118-120, and Gln-124 contribute to the substrate site; these read TCNR and DFE. Cys-58 acts as the Nucleophile in catalysis. 193-198 contacts NADP(+); that stretch reads GTGKIG.

The protein belongs to the glutamyl-tRNA reductase family. In terms of assembly, homodimer.

It catalyses the reaction (S)-4-amino-5-oxopentanoate + tRNA(Glu) + NADP(+) = L-glutamyl-tRNA(Glu) + NADPH + H(+). Its pathway is porphyrin-containing compound metabolism; protoporphyrin-IX biosynthesis; 5-aminolevulinate from L-glutamyl-tRNA(Glu): step 1/2. Functionally, catalyzes the NADPH-dependent reduction of glutamyl-tRNA(Glu) to glutamate 1-semialdehyde (GSA). The chain is Glutamyl-tRNA reductase 1 from Flavobacterium johnsoniae (strain ATCC 17061 / DSM 2064 / JCM 8514 / BCRC 14874 / CCUG 350202 / NBRC 14942 / NCIMB 11054 / UW101) (Cytophaga johnsonae).